The primary structure comprises 27 residues: Delta-actitoxin-Avd2a (27 aa).

3 cysteine pairs are disulfide-bonded: cysteine 3–cysteine 17, cysteine 4–cysteine 11, and cysteine 6–cysteine 22.

This sequence belongs to the sea anemone short toxin (type III) family.

Its subcellular location is the secreted. It localises to the nematocyst. Specific arthropod (crab and insect) toxin that inhibits inactivation of voltage-gated sodium channels. It competes well with the site-3 toxin LqhalphaIT (from the scorpion L.quinquestriatus (AC P17728)) on binding to cockroach neuronal membranes (Ki=21.4 nM), and inhibits the inactivation of D.melanogaster channel (DmNav1), but not that of mammalian Navs expressed in Xenopus oocytes. Its activity is synergically enhanced by ligands of receptor site-4 (Bj-xtrIT (AC P56637)). Its ability to inhibit the channel mutant DmNav1[D1701R] only decreases 5-fold, whereas the inhibition activity is completely lost by LqhalphaIT and Av2 when tested on DmNav1[D1701R]. The polypeptide is Delta-actitoxin-Avd2a (Anemonia sulcata (Mediterranean snakelocks sea anemone)).